A 425-amino-acid chain; its full sequence is Enolase (425 aa).

Q163 contributes to the (2R)-2-phosphoglycerate binding site. The active-site Proton donor is E205. D242, E285, and D312 together coordinate Mg(2+). Positions 337, 366, 367, and 388 each coordinate (2R)-2-phosphoglycerate. The active-site Proton acceptor is the K337.

The protein belongs to the enolase family. It depends on Mg(2+) as a cofactor.

It localises to the cytoplasm. The protein localises to the secreted. The protein resides in the cell surface. It carries out the reaction (2R)-2-phosphoglycerate = phosphoenolpyruvate + H2O. Its pathway is carbohydrate degradation; glycolysis; pyruvate from D-glyceraldehyde 3-phosphate: step 4/5. Catalyzes the reversible conversion of 2-phosphoglycerate (2-PG) into phosphoenolpyruvate (PEP). It is essential for the degradation of carbohydrates via glycolysis. The chain is Enolase from Paracoccus denitrificans (strain Pd 1222).